Here is a 217-residue protein sequence, read N- to C-terminus: Nucleoside diphosphate kinase homolog 5 (217 aa).

An NDK region spans residues 18-151 (ERTLALIKPD…REIRFMFPHS (134 aa)).

It belongs to the NDK family.

Its subcellular location is the cell projection. It localises to the cilium. Its function is as follows. Functions as part of axonemal radial spoke complexes that play an important part in the motility of sperm and cilia. Does not seem to have nucleoside diphosphate kinase (NDPK) activity. Exhibits a 3'-5' exonuclease activity with a preference for single-stranded DNA, suggesting roles in DNA proofreading and repair. The chain is Nucleoside diphosphate kinase homolog 5 (nme5) from Danio rerio (Zebrafish).